Here is a 382-residue protein sequence, read N- to C-terminus: MAAQRPLTIALVAGETSGDILGAGLIRALKARVPNARFVGVAGPRMQAEGCEAWYEMEELAVMGIVEVLGRLRRLLHIRADLTRRFTELKPDVFVGIDAPDFNITLEGNLKKQGIKTIHYVSPSVWAWRQKRVFKIGRSTHMVLAFLPFEKAFYDKFNVPCRFIGHTMADAMPLDPDKNAARDVLGIPHDAHCLALLPGSRGAEVEMLSADFLKTAQLLRQRYPDLEVVVPLVNAKRREQFEKIKAEVAPDLAAHLLDGMAREAMIASDAALLASGTAALECMLAKCPMVVGYRMKPFTFWLAKRLVKTEYVSLPNLLAGRELVKELLQEECEPQKLAEALLPLLANGKTSHAMHDTFRELHQQIRCNADEQAADAVLELAQ.

Belongs to the LpxB family.

It catalyses the reaction 2-N,3-O-bis[(3R)-3-hydroxytetradecanoyl]-alpha-D-glucosaminyl 1-phosphate + UDP-2-N,3-O-bis[(3R)-3-hydroxytetradecanoyl]-alpha-D-glucosamine = lipid A disaccharide (E. coli) + UDP + H(+). The enzyme catalyses a lipid X + a UDP-2-N,3-O-bis[(3R)-3-hydroxyacyl]-alpha-D-glucosamine = a lipid A disaccharide + UDP + H(+). It participates in glycolipid biosynthesis; lipid IV(A) biosynthesis; lipid IV(A) from (3R)-3-hydroxytetradecanoyl-[acyl-carrier-protein] and UDP-N-acetyl-alpha-D-glucosamine: step 5/6. Its function is as follows. Condensation of UDP-2,3-diacylglucosamine and 2,3-diacylglucosamine-1-phosphate to form lipid A disaccharide, a precursor of lipid A, a phosphorylated glycolipid that anchors the lipopolysaccharide to the outer membrane of the cell. This Salmonella agona (strain SL483) protein is Lipid-A-disaccharide synthase.